Here is a 430-residue protein sequence, read N- to C-terminus: Maltoporin (430 aa).

An N-terminal signal peptide occupies residues 1-23; that stretch reads MNNKKTLLAVAISGMMFATSAAA.

This sequence belongs to the porin LamB (TC 1.B.3) family. As to quaternary structure, homotrimer formed of three 18-stranded antiparallel beta-barrels, containing three independent channels.

The protein resides in the cell outer membrane. It catalyses the reaction beta-maltose(in) = beta-maltose(out). Its function is as follows. Involved in the transport of maltose and maltodextrins. The sequence is that of Maltoporin from Actinobacillus succinogenes (strain ATCC 55618 / DSM 22257 / CCUG 43843 / 130Z).